Consider the following 210-residue polypeptide: Large ribosomal subunit protein uL4 (210 aa).

The disordered stretch occupies residues 46–77 (QGTHKSKERGEIAGSTKKIKKQKGTGTARAGS).

The protein belongs to the universal ribosomal protein uL4 family. In terms of assembly, part of the 50S ribosomal subunit.

Functionally, one of the primary rRNA binding proteins, this protein initially binds near the 5'-end of the 23S rRNA. It is important during the early stages of 50S assembly. It makes multiple contacts with different domains of the 23S rRNA in the assembled 50S subunit and ribosome. Forms part of the polypeptide exit tunnel. The protein is Large ribosomal subunit protein uL4 of Amoebophilus asiaticus (strain 5a2).